The primary structure comprises 290 residues: Pyridoxal 5'-phosphate synthase subunit PdxS (290 aa).

Position 22 (D22) interacts with D-ribose 5-phosphate. The active-site Schiff-base intermediate with D-ribose 5-phosphate is the K79. A D-ribose 5-phosphate-binding site is contributed by G151. Residue R163 coordinates D-glyceraldehyde 3-phosphate. D-ribose 5-phosphate is bound by residues G212 and 233-234 (GS).

The protein belongs to the PdxS/SNZ family. In terms of assembly, in the presence of PdxT, forms a dodecamer of heterodimers.

The enzyme catalyses aldehydo-D-ribose 5-phosphate + D-glyceraldehyde 3-phosphate + L-glutamine = pyridoxal 5'-phosphate + L-glutamate + phosphate + 3 H2O + H(+). It participates in cofactor biosynthesis; pyridoxal 5'-phosphate biosynthesis. Catalyzes the formation of pyridoxal 5'-phosphate from ribose 5-phosphate (RBP), glyceraldehyde 3-phosphate (G3P) and ammonia. The ammonia is provided by the PdxT subunit. Can also use ribulose 5-phosphate and dihydroxyacetone phosphate as substrates, resulting from enzyme-catalyzed isomerization of RBP and G3P, respectively. The polypeptide is Pyridoxal 5'-phosphate synthase subunit PdxS (Clostridium botulinum (strain Loch Maree / Type A3)).